The chain runs to 305 residues: Putative glutamine amidotransferase MTH_191 (305 aa).

The active site involves C2. A Glutamine amidotransferase type-2 domain is found at 2-305 (CGIAGVVYKD…SPGEVRVYEI (304 aa)).

In Methanothermobacter thermautotrophicus (strain ATCC 29096 / DSM 1053 / JCM 10044 / NBRC 100330 / Delta H) (Methanobacterium thermoautotrophicum), this protein is Putative glutamine amidotransferase MTH_191.